A 285-amino-acid chain; its full sequence is MIEVTLLGTGSPVPDARRAGPSTLVRAGGHAFLVDCGRGVQLRMAAAGIAANGLSALLLTHLHSDHIADLGDLLITRWVTTFTDQVPLQIIGPPGTAETVTAMLAAFGRDIGYRIAHHPDLTAPPPVEVHEVTEGVAWDHDGVTVRVAPTDHRPVAPTIGFRVEHADASVVLAGDTVPCATLDALAAGAGALVHTAIRKDLVELAPQQRVREVCEYHSSVEEAAETAERAGVGILVLTHYLPPIAPGQEADWRARAATAFPRQIELGDDLHRVEVHPGVCVKPAG.

Zn(2+) contacts are provided by His61, His63, Asp65, His66, His152, Asp175, and His239. The active-site Proton acceptor is Asp65.

Belongs to the RNase Z family. In terms of assembly, homodimer. The cofactor is Zn(2+).

The enzyme catalyses Endonucleolytic cleavage of RNA, removing extra 3' nucleotides from tRNA precursor, generating 3' termini of tRNAs. A 3'-hydroxy group is left at the tRNA terminus and a 5'-phosphoryl group is left at the trailer molecule.. In terms of biological role, zinc phosphodiesterase, which displays some tRNA 3'-processing endonuclease activity. Probably involved in tRNA maturation, by removing a 3'-trailer from precursor tRNA. This Mycobacterium sp. (strain JLS) protein is Ribonuclease Z.